Consider the following 1009-residue polypeptide: Glutamate receptor ionotropic, delta-1 (1009 aa).

Residues 1–20 (MEALTLWLLPWICQCVSVRA) form the signal peptide. An interaction with CBLN1 region spans residues 21 to 436 (DSIIHIGAIF…ERPMGSRLQG (416 aa)). Over 21–562 (DSIIHIGAIF…SIFSLFAPFD (542 aa)) the chain is Extracellular. Intrachain disulfides connect Cys80–Cys351, Cys96–Cys128, and Cys294–Cys306. N-linked (GlcNAc...) asparagine glycans are attached at residues Asn131 and Asn200. 2 N-linked (GlcNAc...) asparagine glycosylation sites follow: Asn422 and Asn498. Ca(2+) contacts are provided by Glu527, Val530, and Asp531. The chain crosses the membrane as a helical span at residues 563–583 (FAVWACIAAAIPVVGVLIFVL). Residues 584-637 (NRIQAVRAQSAAQPRPSASATLHSAIWIVYGAFVQQGGESSVNSMAMRIVMGSW) are Cytoplasmic-facing. The chain crosses the membrane as a helical span at residues 638 to 658 (WLFTLIVCSSYTANLAAFLTV). Topologically, residues 659-830 (SRMDNPIRTF…ADGKSLKLHS (172 aa)) are extracellular. Residues Asp753, Asp755, and Ser757 each coordinate Ca(2+). Residues 831-851 (FAGVFCILAIGLLLACLVAAL) traverse the membrane as a helical segment. Topologically, residues 852–1009 (ELWWNSNRCH…ALDTSHGTSI (158 aa)) are cytoplasmic. Residues 930 to 942 (FLPEQSSHGTSRT) are compositionally biased toward polar residues. The interval 930–954 (FLPEQSSHGTSRTLSSGPSSNLPLP) is disordered. The span at 943–954 (LSSGPSSNLPLP) shows a compositional bias: low complexity.

The protein belongs to the glutamate-gated ion channel (TC 1.A.10.1) family. GRID1 subfamily. Homodimer. Interacts (via extracellular N-terminal domain) with CBLN1 (via C1q domain), and more weakly with CBLN2; the interactions mediate the trans-synaptic adhesion complexes also with neurexins and are required for ligand-gated cation channel activity.

Its subcellular location is the postsynaptic cell membrane. It carries out the reaction Ca(2+)(in) = Ca(2+)(out). The enzyme catalyses Na(+)(in) = Na(+)(out). Its function is as follows. Member of the ionotropic glutamate receptor family, which plays a crucial role in synaptic organization and signal transduction in the central nervous system. Although it shares structural features with ionotropic glutamate receptors, does not bind glutamate as a primary ligand. Instead, forms trans-synaptic adhesion complexes with presynaptic neurexins and cerebellins, regulating NMDA and AMPA receptor activity and influencing synaptic plasticity through signal transduction. In the presence of neurexins and cerebellins, forms cation-selective channels that are proposed to be gated by glycine and D-serine. However, recent research disputes this ligand-gated cation channel activity. Cation-selective ion channel can be triggered by GRM1 in dopaminergic neurons. Also acts as a receptor for GABA, modulating inhibitory synaptic plasticity through non-ionotropic mechanisms. The chain is Glutamate receptor ionotropic, delta-1 from Homo sapiens (Human).